The chain runs to 253 residues: MRILLSNDDGVHAPGIQTLAKALREFADVQVVAPDRNRSGASNSLTLESSLRTFTFENGDIAVQMGTPTDCVYLGVNALMRPRPDIVVSGINAGPNLGDDVIYSGTVAAAMEGRHLGFPALAVSLDGHKHYDTAAAVTCSILRALCKEPLRTGRILNINVPDLPLDQIKGIRVTRCGTRHPADQVIPQQDPRGNTLYWIGPPGGKCDAGPGTDFAAVDEGYVSITPLHVDLTAHSAQYVVSDWLNSVGVGTQW.

The a divalent metal cation site is built by Asp-8, Asp-9, Ser-39, and Asn-92.

The protein belongs to the SurE nucleotidase family. A divalent metal cation is required as a cofactor.

It localises to the cytoplasm. It catalyses the reaction a ribonucleoside 5'-phosphate + H2O = a ribonucleoside + phosphate. It carries out the reaction a ribonucleoside 3'-phosphate + H2O = a ribonucleoside + phosphate. The enzyme catalyses [phosphate](n) + H2O = [phosphate](n-1) + phosphate + H(+). In terms of biological role, nucleotidase with a broad substrate specificity as it can dephosphorylate various ribo- and deoxyribonucleoside 5'-monophosphates and ribonucleoside 3'-monophosphates with highest affinity to 3'-AMP. Also hydrolyzes polyphosphate (exopolyphosphatase activity) with the preference for short-chain-length substrates (P20-25). Might be involved in the regulation of dNTP and NTP pools, and in the turnover of 3'-mononucleotides produced by numerous intracellular RNases (T1, T2, and F) during the degradation of various RNAs. The polypeptide is 5'/3'-nucleotidase SurE (Escherichia coli O7:K1 (strain IAI39 / ExPEC)).